A 130-amino-acid chain; its full sequence is Small ribosomal subunit protein uS11 (130 aa).

Residues 1-15 are compositionally biased toward basic residues; it reads MARPTKKSGPRKQKR. Residues 1–21 form a disordered region; that stretch reads MARPTKKSGPRKQKRNVPSGV.

The protein belongs to the universal ribosomal protein uS11 family. In terms of assembly, part of the 30S ribosomal subunit. Interacts with proteins S7 and S18. Binds to IF-3.

Its function is as follows. Located on the platform of the 30S subunit, it bridges several disparate RNA helices of the 16S rRNA. Forms part of the Shine-Dalgarno cleft in the 70S ribosome. This chain is Small ribosomal subunit protein uS11, found in Synechococcus elongatus (strain ATCC 33912 / PCC 7942 / FACHB-805) (Anacystis nidulans R2).